The primary structure comprises 248 residues: MIDENKQVNHTSQQLGESTEVKQAIMSESPAQINNNESANEVTEPVAIPTNVVGDTTATEDNGFTATQIQEANTAALAELTQQISSLKTQLDERSTQYMRIAADFENYRKRTQKEKEELDLQVKRNTILELLPIVDNFERARSHLKPQTESEMTIHKSYQGVYKQLVDSLKRLGVSPMRPEGQEFDPNLHEAVMREPTDEHPEGTVLEELVRGYYLGDRVLRHSMVKVAAPKEDTLPAQENQSSPADS.

Residues 229–248 (AAPKEDTLPAQENQSSPADS) are disordered. Over residues 238-248 (AQENQSSPADS) the composition is skewed to polar residues.

This sequence belongs to the GrpE family. As to quaternary structure, homodimer.

The protein resides in the cytoplasm. In terms of biological role, participates actively in the response to hyperosmotic and heat shock by preventing the aggregation of stress-denatured proteins, in association with DnaK and GrpE. It is the nucleotide exchange factor for DnaK and may function as a thermosensor. Unfolded proteins bind initially to DnaJ; upon interaction with the DnaJ-bound protein, DnaK hydrolyzes its bound ATP, resulting in the formation of a stable complex. GrpE releases ADP from DnaK; ATP binding to DnaK triggers the release of the substrate protein, thus completing the reaction cycle. Several rounds of ATP-dependent interactions between DnaJ, DnaK and GrpE are required for fully efficient folding. The chain is Protein GrpE from Nostoc sp. (strain PCC 7120 / SAG 25.82 / UTEX 2576).